A 79-amino-acid polypeptide reads, in one-letter code: Acyl carrier protein (79 aa).

Residues 3–78 (QEILEKVRSI…DAVSYIQEKK (76 aa)) form the Carrier domain. Ser38 bears the O-(pantetheine 4'-phosphoryl)serine mark.

It belongs to the acyl carrier protein (ACP) family. 4'-phosphopantetheine is transferred from CoA to a specific serine of apo-ACP by AcpS. This modification is essential for activity because fatty acids are bound in thioester linkage to the sulfhydryl of the prosthetic group.

It is found in the cytoplasm. It participates in lipid metabolism; fatty acid biosynthesis. Functionally, carrier of the growing fatty acid chain in fatty acid biosynthesis. The chain is Acyl carrier protein from Synechococcus sp. (strain RCC307).